We begin with the raw amino-acid sequence, 98 residues long: Large ribosomal subunit protein uL23 (98 aa).

Belongs to the universal ribosomal protein uL23 family. In terms of assembly, part of the 50S ribosomal subunit. Contacts protein L29, and trigger factor when it is bound to the ribosome.

Functionally, one of the early assembly proteins it binds 23S rRNA. One of the proteins that surrounds the polypeptide exit tunnel on the outside of the ribosome. Forms the main docking site for trigger factor binding to the ribosome. This is Large ribosomal subunit protein uL23 from Nitrobacter winogradskyi (strain ATCC 25391 / DSM 10237 / CIP 104748 / NCIMB 11846 / Nb-255).